Consider the following 415-residue polypeptide: Cyclin-A2 (415 aa).

It belongs to the cyclin family. Cyclin AB subfamily. Interacts with the CDK1 and CDK2 protein kinases to form serine/threonine kinase holoenzyme complexes. In terms of tissue distribution, ubiquitous.

The protein resides in the nucleus. Its subcellular location is the cytoplasm. In terms of biological role, cyclin which controls both the G1/S and the G2/M transition phases of the cell cycle. Functions through the formation of specific serine/threonine kinase holoenzyme complexes with the cyclin-dependent protein kinases CDK1 and CDK2. The cyclin subunit confers the substrate specificity of these complexes and differentially interacts with and activates CDK1 and CDK2 throughout the cell cycle. The sequence is that of Cyclin-A2 (ccna2) from Xenopus laevis (African clawed frog).